The sequence spans 471 residues: Lincomycin resistance protein LmrB (471 aa).

The next 12 membrane-spanning stretches (helical) occupy residues 13-35 (PIPI…TALN), 55-77 (LTTG…LQWF), 84-106 (FTAV…FAML), 111-133 (VVQA…LIFP), 140-162 (AMGM…SGLI), 167-189 (TWNW…GMKF), 201-223 (IDIL…FSSA), 227-249 (GWGS…LFVW), 269-291 (FTLG…ILLP), 329-351 (AYGP…FFLT), 358-380 (SALT…MMPA), and 445-467 (GIQN…SLFI).

The protein belongs to the major facilitator superfamily. EmrB family.

Its subcellular location is the cell membrane. Functionally, proton-dependent transporter. May mediate the efflux of lincomycin. This is Lincomycin resistance protein LmrB (lmrB) from Listeria monocytogenes serovar 1/2a (strain ATCC BAA-679 / EGD-e).